The following is a 623-amino-acid chain: Kelch-like protein diablo (623 aa).

Residues 1–54 (MGDLPGSGSTAQPRDAAVTGTGGNSTAGGGSSVGSTAVDRPPSPARLSHTSEKH) are disordered. T19 bears the Phosphothreonine mark. The segment covering 20-32 (GTGGNSTAGGGSS) has biased composition (gly residues). In terms of domain architecture, BTB spans 72–139 (CDVVLNVGGR…CYTAHIIVEE (68 aa)). One can recognise a BACK domain in the interval 174–276 (CLGIRAFADT…SPKFLVGTVG (103 aa)). Kelch repeat units follow at residues 323 to 369 (VLFA…VLND), 371 to 417 (LYAV…VLDE), 418 to 464 (FLYA…VLGG), 466 to 511 (LYAI…VFNN), 513 to 558 (IYAV…VVNG), and 559 to 605 (QLYA…VMRA).

Its pathway is protein modification; protein ubiquitination. Probable substrate-specific adapter of an E3 ubiquitin-protein ligase complex which mediates the ubiquitination and subsequent proteasomal degradation of target proteins. May have a role in synapse differentiation and growth. The protein is Kelch-like protein diablo of Drosophila simulans (Fruit fly).